The sequence spans 364 residues: Lysophosphatidic acid receptor 1 (364 aa).

The Extracellular segment spans residues 1-50 (MAAAFTSSPVVSQPQFTAMNEQQCFSNESIAFFYNRSGKYLATEWNTVTK). Cystine bridges form between Cys-24-Cys-190 and Cys-188-Cys-195. Asn-27 and Asn-35 each carry an N-linked (GlcNAc...) asparagine glycan. A 1-acyl-sn-glycero-3-phosphate is bound at residue Lys-39. Residues 51 to 75 (LVMGLGITVCIFIMLANLLVMVAIY) traverse the membrane as a helical segment. Residues 76–83 (VNRRFHFP) are Cytoplasmic-facing. Residues 84 to 107 (IYYLMANLAAADFFAGLAYFYLMF) traverse the membrane as a helical segment. At 108 to 121 (NTGPNTRRLTVSTW) the chain is on the extracellular side. Residues 122–144 (LLRQGLIDTSLTVSVANLLAIAI) form a helical membrane-spanning segment. Position 124–129 (124–129 (RQGLID)) interacts with a 1-acyl-sn-glycero-3-phosphate. The Cytoplasmic portion of the chain corresponds to 145-163 (ERHITVFRMQLHARMSNRR). A helical transmembrane segment spans residues 164-184 (VVVVIVVIWTMAIVMGAIPSV). The Extracellular segment spans residues 185-204 (GWNCICDIENCSNMAPLYSD). Residues 205 to 225 (SYLVFWAIFNLVTFVVMVVLY) traverse the membrane as a helical segment. Trp-210 is a binding site for a 1-acyl-sn-glycero-3-phosphate. Over 226–255 (AHIFGYVRQRTMRMSRHSSGPRRNRDTMMS) the chain is Cytoplasmic. The helical transmembrane segment at 256–280 (LLKTVVIVLGAFIICWTPGLVLLLL) threads the bilayer. The Extracellular segment spans residues 281 to 294 (DVCCPQCDVLAYEK). Cys-284 and Cys-287 are disulfide-bonded. The chain crosses the membrane as a helical span at residues 295 to 315 (FFLLLAEFNSAMNPIIYSYRD). The Cytoplasmic portion of the chain corresponds to 316–364 (KEMSATFRQILCCQRSENTSGPTEGSDRSASSLNHTILAGVHSNDHSVV). Position 341 is a phosphoserine (Ser-341). Thr-351 carries the phosphothreonine modification.

This sequence belongs to the G-protein coupled receptor 1 family. Interacts with RALA and GRK2. Interacts with GNAQ and GNA13. Interacts with CD14; the interaction is enhanced by exposure to bacterial lipopolysaccharide (LPS). Post-translationally, N-glycosylated.

Its subcellular location is the cell surface. The protein resides in the cell membrane. The protein localises to the endosome. Functionally, receptor for lysophosphatidic acid (LPA). Plays a role in the reorganization of the actin cytoskeleton, cell migration, differentiation and proliferation, and thereby contributes to the responses to tissue damage and infectious agents. Activates downstream signaling cascades via the G(i)/G(o), G(12)/G(13), and G(q) families of heteromeric G proteins. Signaling inhibits adenylyl cyclase activity and decreases cellular cAMP levels. Signaling triggers an increase of cytoplasmic Ca(2+) levels. Activates RALA; this leads to the activation of phospholipase C (PLC) and the formation of inositol 1,4,5-trisphosphate. Signaling mediates activation of down-stream MAP kinases. Contributes to the regulation of cell shape. Promotes Rho-dependent reorganization of the actin cytoskeleton in neuronal cells and neurite retraction. Promotes the activation of Rho and the formation of actin stress fibers. Promotes formation of lamellipodia at the leading edge of migrating cells via activation of RAC1. Through its function as LPA receptor, plays a role in chemotaxis and cell migration, including responses to injury and wounding. Plays a role in triggering inflammation in response to bacterial lipopolysaccharide (LPS) via its interaction with CD14. Promotes cell proliferation in response to LPA. Inhibits the intracellular ciliogenesis pathway in response to LPA and through AKT1 activation. Required for normal skeleton development. May play a role in osteoblast differentiation. Required for normal brain development. Required for normal proliferation, survival and maturation of newly formed neurons in the adult dentate gyrus. Plays a role in pain perception and in the initiation of neuropathic pain. The sequence is that of Lysophosphatidic acid receptor 1 (LPAR1) from Bos taurus (Bovine).